Consider the following 1364-residue polypeptide: Condensin complex subunit 1 (1364 aa).

Residues 1 to 588 (MTFHFHIPLA…AQVNPTSEEL (588 aa)) form an interaction with XCAP-E and XCAP-C region. Over residues 567–577 (DLEQPTTKDQD) the composition is skewed to basic and acidic residues. Disordered stretches follow at residues 567-596 (DLEQ…VQNS) and 1273-1364 (LENM…SRAK). Over residues 579–596 (AQVNPTSEELPSQEVQNS) the composition is skewed to polar residues. Residue T1314 is modified to Phosphothreonine; by CDK1. The short motif at 1317–1326 (PPASRKSRRK) is the Bipartite nuclear localization signal element. Residues 1333-1345 (SDEESDLEAELSE) show a composition bias toward acidic residues. 2 positions are modified to phosphothreonine; by CDK1: T1348 and T1353.

Belongs to the CND1 (condensin subunit 1) family. As to quaternary structure, component of the condensin complex, which contains the XCAP-E/SMC2 and XCAP-C/SMC4 heterodimer, and three non SMC subunits that probably regulate the complex: XCAP-H/NCAPH, XCAP-D2/NCAPD2 and XCAP-G/NCAPG. In terms of processing, phosphorylated by CDK1. Its phosphorylation, as well as that of XCAP-H and XCAP-G subunits, activates the condensin complex and is required for chromosome condensation.

Its subcellular location is the nucleus. The protein resides in the cytoplasm. It is found in the chromosome. Regulatory subunit of the condensin complex, a complex required for conversion of interphase chromatin into mitotic-like condense chromosomes. The condensin complex probably introduces positive supercoils into relaxed DNA in the presence of type I topoisomerases and converts nicked DNA into positive knotted forms in the presence of type II topoisomerases. May target the condensin complex to DNA via its C-terminal domain. The polypeptide is Condensin complex subunit 1 (ncapd2) (Xenopus laevis (African clawed frog)).